The primary structure comprises 862 residues: Molybdenum cofactor sulfurase (862 aa).

Ser-34 is modified (phosphoserine). Lys-264 is modified (N6-(pyridoxal phosphate)lysine). Cys-424 is a catalytic residue. Ser-517 carries the phosphoserine modification. Positions 704–855 (RKTPKKGQPP…LSVGSEVLPV (152 aa)) constitute an MOSC domain.

This sequence belongs to the class-V pyridoxal-phosphate-dependent aminotransferase family. MOCOS subfamily. It depends on pyridoxal 5'-phosphate as a cofactor.

The catalysed reaction is Mo-molybdopterin + L-cysteine + AH2 = thio-Mo-molybdopterin + L-alanine + A + H2O. The protein operates within cofactor biosynthesis; molybdopterin biosynthesis. Its function is as follows. Sulfurates the molybdenum cofactor. Sulfation of molybdenum is essential for xanthine dehydrogenase (XDH) and aldehyde oxidase (ADO) enzymes in which molybdenum cofactor is liganded by 1 oxygen and 1 sulfur atom in active form. This is Molybdenum cofactor sulfurase (Mocos) from Mus musculus (Mouse).